The following is a 123-amino-acid chain: Protein Wnt-3b (123 aa).

Residue S1 is the site of O-palmitoleoyl serine; by PORCN attachment. Cysteines 89 and 104 form a disulfide. N90 carries N-linked (GlcNAc...) asparagine glycosylation.

The protein belongs to the Wnt family. Palmitoleoylation is required for efficient binding to frizzled receptors. Depalmitoleoylation leads to Wnt signaling pathway inhibition.

Its subcellular location is the secreted. It is found in the extracellular space. The protein localises to the extracellular matrix. Functionally, ligand for members of the frizzled family of seven transmembrane receptors. Probable developmental protein. May be a signaling molecule which affects the development of discrete regions of tissues. Is likely to signal over only few cell diameters. This chain is Protein Wnt-3b (WNT3B), found in Meleagris gallopavo (Wild turkey).